A 540-amino-acid polypeptide reads, in one-letter code: Chaperonin GroEL (540 aa).

ATP contacts are provided by residues 29–32 (TLGP), 86–90 (DGTTT), glycine 413, 477–479 (DAL), and aspartate 493.

It belongs to the chaperonin (HSP60) family. Forms a cylinder of 14 subunits composed of two heptameric rings stacked back-to-back. Interacts with the co-chaperonin GroES.

The protein localises to the cytoplasm. The enzyme catalyses ATP + H2O + a folded polypeptide = ADP + phosphate + an unfolded polypeptide.. Functionally, together with its co-chaperonin GroES, plays an essential role in assisting protein folding. The GroEL-GroES system forms a nano-cage that allows encapsulation of the non-native substrate proteins and provides a physical environment optimized to promote and accelerate protein folding. This chain is Chaperonin GroEL, found in Clostridium botulinum (strain Alaska E43 / Type E3).